The sequence spans 62 residues: Short neurotoxin 1 (62 aa).

A compositionally biased stretch (polar residues) spans 1–16 (LECHNQQSIQTPTTTG). Residues 1 to 20 (LECHNQQSIQTPTTTGCSGG) form a disordered region. 4 disulfide bridges follow: Cys3–Cys24, Cys17–Cys41, Cys43–Cys54, and Cys55–Cys60.

Belongs to the three-finger toxin family. Short-chain subfamily. Type I alpha-neurotoxin sub-subfamily. In terms of tissue distribution, expressed by the venom gland.

The protein localises to the secreted. Functionally, binds to muscle nicotinic acetylcholine receptor (nAChR) and inhibit acetylcholine from binding to the receptor, thereby impairing neuromuscular transmission. This is Short neurotoxin 1 from Naja kaouthia (Monocled cobra).